Reading from the N-terminus, the 369-residue chain is Histone deacetylase 8 (369 aa).

Residues 5 to 316 are histone deacetylase; sequence LLPVYIHSAE…WTYLTALIVG (312 aa). D93 serves as a coordination point for substrate. Catalysis depends on H135, which acts as the Proton acceptor. G143 lines the substrate pocket. A divalent metal cation-binding residues include D170, H172, and D259. Substrate is bound at residue Y298.

It belongs to the histone deacetylase family. HD type 1 subfamily. Requires a divalent metal cation as cofactor.

Its subcellular location is the nucleus. It localises to the chromosome. The protein localises to the cytoplasm. The enzyme catalyses N(6)-acetyl-L-lysyl-[histone] + H2O = L-lysyl-[histone] + acetate. The catalysed reaction is N(6)-acetyl-L-lysyl-[protein] + H2O = L-lysyl-[protein] + acetate. It carries out the reaction N(6)-(2E)-butenoyl-L-lysyl-[protein] + H2O = (2E)-2-butenoate + L-lysyl-[protein]. Its activity is regulated as follows. Its activity is inhibited by trichostatin A (TSA) and butyrate, 2 well known histone deacetylase inhibitors. Its function is as follows. Histone deacetylase that catalyzes the deacetylation of lysine residues on the N-terminal part of the core histones (H2A, H2B, H3 and H4). Histone deacetylation gives a tag for epigenetic repression and plays an important role in transcriptional regulation, cell cycle progression and developmental events. Histone deacetylases act via the formation of large multiprotein complexes. Also involved in the deacetylation of non-histone proteins. In addition to protein deacetylase activity, also has protein-lysine deacylase activity: acts as a protein decrotonylase by mediating decrotonylation ((2E)-butenoyl) of histones. This is Histone deacetylase 8 (hdac8) from Xenopus tropicalis (Western clawed frog).